We begin with the raw amino-acid sequence, 912 residues long: Metabotropic glutamate receptor 4 (912 aa).

The signal sequence occupies residues 1-32; the sequence is MPGKSGLGWWWARLPLCLLLSLYGPWMPSSLG. Over 33–586 the chain is Extracellular; it reads KPKGHPHMNS…PIIKLEWDSP (554 aa). Cys67 and Cys109 are oxidised to a cystine. A glycan (N-linked (GlcNAc...) asparagine) is linked at Asn98. L-glutamate is bound by residues Ser159, 180–182, and Tyr230; that span reads AST. 7 disulfides stabilise this stretch: Cys249/Cys538, Cys372/Cys388, Cys428/Cys435, Cys520/Cys539, Cys524/Cys542, Cys545/Cys557, and Cys560/Cys573. The N-linked (GlcNAc...) asparagine glycan is linked to Asn301. An L-glutamate-binding site is contributed by Asp312. Lys405 serves as a coordination point for L-glutamate. Asn454 and Asn484 each carry an N-linked (GlcNAc...) asparagine glycan. N-linked (GlcNAc...) asparagine glycosylation is present at Asn569. The helical transmembrane segment at 587-607 threads the bilayer; the sequence is WAVLPLFLAVVGIAATLFVVI. Topologically, residues 608 to 624 are cytoplasmic; the sequence is TFVRYNDTPIVKASGRE. Residues 625-645 traverse the membrane as a helical segment; that stretch reads LSYVLLAGIFLCYATTFLMIA. The Extracellular portion of the chain corresponds to 646 to 653; sequence EPDLGTCS. Residues 654–671 traverse the membrane as a helical segment; that stretch reads LRRIFLGLGMSISYAALL. Over 672–699 the chain is Cytoplasmic; sequence TKTNRIYRIFEQGKRSVSAPRFISPASQ. Residues 700–720 form a helical membrane-spanning segment; the sequence is LAITFSLISLQLLGICVWFVV. Residues 721 to 751 lie on the Extracellular side of the membrane; it reads DPSHSVVDFQDQRTLDPRFARGVLKCDISDL. The helical transmembrane segment at 752 to 772 threads the bilayer; sequence SLICLLGYSMLLMVTCTVYAI. Topologically, residues 773-786 are cytoplasmic; the sequence is KTRGVPETFNEAKP. The helical transmembrane segment at 787 to 807 threads the bilayer; it reads IGFTMYTTCIVWLAFIPIFFG. The Extracellular portion of the chain corresponds to 808–826; that stretch reads TSQSADKLYIQTTTLTVSV. The chain crosses the membrane as a helical span at residues 827–847; sequence SLSASVSLGMLYMPKVYIILF. Residues 848-912 lie on the Cytoplasmic side of the membrane; sequence HPEQNVPKRK…TYVTYTNHAI (65 aa).

Belongs to the G-protein coupled receptor 3 family. In terms of assembly, interacts with PICK1.

It localises to the cell membrane. Functionally, G-protein coupled receptor for glutamate. Ligand binding causes a conformation change that triggers signaling via guanine nucleotide-binding proteins (G proteins) and modulates the activity of down-stream effectors. Signaling inhibits adenylate cyclase activity. This Macaca fascicularis (Crab-eating macaque) protein is Metabotropic glutamate receptor 4 (GRM4).